Here is a 92-residue protein sequence, read N- to C-terminus: SPbeta prophage-derived uncharacterized protein YopY (92 aa).

The chain is SPbeta prophage-derived uncharacterized protein YopY (yopY) from Bacillus subtilis (strain 168).